The primary structure comprises 90 residues: Large ribosomal subunit protein bL27 (90 aa).

Positions 1 to 21 (MASKKAGGSTRNGRDSEAKRL) are disordered.

The protein belongs to the bacterial ribosomal protein bL27 family.

This chain is Large ribosomal subunit protein bL27, found in Neisseria gonorrhoeae (strain ATCC 700825 / FA 1090).